We begin with the raw amino-acid sequence, 107 residues long: Endonuclease ALBA3 (107 aa).

An N6-acetyllysine mark is found at Lys-23 and Lys-32.

The protein belongs to the histone-like Alba family. In terms of assembly, homodimer. Interacts (acetylated and unacetylated) with Sir2A. A divalent metal cation serves as cofactor. Acetylated. Exists in both acetylated and unacetylated forms but predominantly in an acetylated form. Deacetylated by Sir2A.

Its subcellular location is the nucleus. It localises to the chromosome. It is found in the telomere. The protein resides in the cytoplasm. Mild acetylation lowers protein interaction with DNA and high acetylation abolishes DNA-binding activity. DNA binding and endonuclease activity is modulated via deacetylation of Lys-23 by Sir2A. Inhibited in the presence of EDTA and EGTA. Functionally, possesses DNA-binding and endonuclease activities. Binds DNA cooperatively in sequence-independent manner at the DNA minor groove. Exhibits apurinic/apyrimidinic site-driven endonuclease activity. Binds RNA; shows high affinity for poly(A) and a lower affinity for poly(U) templates. In vitro, prevents transcription after DNA binding. Associates with the telomeric region, the subtelomeric TARE6 repeat sequence and the var gene promoters. The polypeptide is Endonuclease ALBA3 (Plasmodium falciparum (isolate 3D7)).